A 908-amino-acid polypeptide reads, in one-letter code: NADH-quinone oxidoreductase subunit G (908 aa).

The 82-residue stretch at 2–83 (ATIHVDGKEY…GTFISIDDEE (82 aa)) folds into the 2Fe-2S ferredoxin-type domain. Cysteine 34, cysteine 45, cysteine 48, and cysteine 67 together coordinate [2Fe-2S] cluster. A 4Fe-4S His(Cys)3-ligated-type domain is found at 83-122 (EAKQFRESVVEWLMTNHPHDCPVCEEGGNCHLQDMTVMTG). [4Fe-4S] cluster-binding residues include histidine 99, cysteine 103, cysteine 106, cysteine 112, cysteine 151, cysteine 154, cysteine 157, cysteine 201, cysteine 228, cysteine 231, cysteine 235, and cysteine 263. Positions 221 to 277 (MQFAPSICQQCSIGCNISPGERYGELRRIENRYNGTVNHYFLCDRGRFGYGYVNLKD) constitute a 4Fe-4S Mo/W bis-MGD-type domain.

It belongs to the complex I 75 kDa subunit family. In terms of assembly, composed of 13 different subunits. Subunits NuoCD, E, F, and G constitute the peripheral sector of the complex. It depends on [2Fe-2S] cluster as a cofactor. Requires [4Fe-4S] cluster as cofactor.

The enzyme catalyses a quinone + NADH + 5 H(+)(in) = a quinol + NAD(+) + 4 H(+)(out). Its function is as follows. NDH-1 shuttles electrons from NADH, via FMN and iron-sulfur (Fe-S) centers, to quinones in the respiratory chain. The immediate electron acceptor for the enzyme in this species is believed to be ubiquinone. Couples the redox reaction to proton translocation (for every two electrons transferred, four hydrogen ions are translocated across the cytoplasmic membrane), and thus conserves the redox energy in a proton gradient. This is NADH-quinone oxidoreductase subunit G (nuoG) from Salmonella typhi.